The chain runs to 323 residues: Aquaporin-4 (323 aa).

At M1–K36 the chain is on the cytoplasmic side. Residues C13 and C17 are each lipidated (S-palmitoyl cysteine). Residues A37–I57 traverse the membrane as a helical segment. Over N58–D69 the chain is Extracellular. A helical membrane pass occupies residues M70–G89. Residues H90 to G93 are Cytoplasmic-facing. Positions G94–T101 form an intramembrane region, discontinuously helical. The NPA 1 signature appears at N97–A99. At V102 to S115 the chain is on the cytoplasmic side. Phosphoserine; by PKG is present on S111. Residues V116–V136 form a helical membrane-spanning segment. Residues T137–T155 are Extracellular-facing. N153 carries N-linked (GlcNAc...) asparagine glycosylation. Residues A156–A176 traverse the membrane as a helical segment. Topologically, residues S177 to D184 are cytoplasmic. The residue at position 180 (S180) is a Phosphoserine; by PKC. A helical transmembrane segment spans residues V185–I205. N206 carries N-linked (GlcNAc...) asparagine glycosylation. The Extracellular portion of the chain corresponds to N206–T208. An intramembrane region (discontinuously helical) is located at residues G209 to V222. Positions N213–A215 match the NPA 2 motif. Over I223–W231 the chain is Extracellular. The chain crosses the membrane as a helical span at residues I232 to F252. The Cytoplasmic portion of the chain corresponds to C253–V323. Phosphoserine occurs at positions 276 and 285. T289 bears the Phosphothreonine mark. S321 bears the Phosphoserine mark.

This sequence belongs to the MIP/aquaporin (TC 1.A.8) family. As to quaternary structure, homotetramer. The tetramers can form oligomeric arrays in membranes. The size of the oligomers differs between tissues and is smaller in skeletal muscle than in brain. Interaction between AQP4 oligomeric arrays in close-by cells can contribute to cell-cell adhesion. Part of a complex containing MLC1, TRPV4, HEPACAM and ATP1B1. In terms of processing, phosphorylation by PKC at Ser-180 reduces conductance by 50%. Phosphorylation by PKG at Ser-111 in response to glutamate increases conductance by 40%; this increase is not due to increased presence at the cell membrane. Post-translationally, isoform 2: Palmitoylated on its N-terminal region. Isoform 1: Not palmitoylated. As to expression, detected in brain cortex, especially around cortical blood vessels, and subjacent to pia, with lower levels in parenchymal membranes. Detected in ependymal and astroglial cells in brain. Detected in supporting Hensen's cells, inner sulcus cells and Claudius cells in the inner ear. Detected in skeletal muscle. Detected in gastric parietal cells. Detected in principal cells in collecting ducts in kidney medulla (at protein level). Detected in brain, heart and skeletal muscle.

It localises to the cell membrane. Its subcellular location is the basolateral cell membrane. The protein resides in the endosome membrane. The protein localises to the sarcolemma. It is found in the cell projection. The catalysed reaction is H2O(in) = H2O(out). Forms a water-specific channel. Plays an important role in brain water homeostasis and in glymphatic solute transport. Required for a normal rate of water exchange across the blood brain interface. Required for normal levels of cerebrospinal fluid influx into the brain cortex and parenchyma along paravascular spaces that surround penetrating arteries, and for normal drainage of interstitial fluid along paravenous drainage pathways. Thereby, it is required for normal clearance of solutes from the brain interstitial fluid, including soluble beta-amyloid peptides derived from APP. Plays a redundant role in urinary water homeostasis and urinary concentrating ability. The chain is Aquaporin-4 (Aqp4) from Mus musculus (Mouse).